A 350-amino-acid chain; its full sequence is Ion-translocating oxidoreductase complex subunit D (350 aa).

Helical transmembrane passes span 19–39 (LMLL…WFFG), 41–61 (GTLI…ALVL), 67–87 (PVKP…IGLS), 88–108 (LPPL…IIIA), and 122–142 (PAMV…TSWL). Threonine 186 carries the post-translational modification FMN phosphoryl threonine. The next 4 membrane-spanning stretches (helical) occupy residues 213-233 (WGGI…LFLL), 242-262 (IPGA…LMTP), 264-284 (ATAT…AFFI), and 299-316 (LVYG…RRFG).

This sequence belongs to the NqrB/RnfD family. In terms of assembly, the complex is composed of six subunits: RnfA, RnfB, RnfC, RnfD, RnfE and RnfG. It depends on FMN as a cofactor.

Its subcellular location is the cell inner membrane. In terms of biological role, part of a membrane-bound complex that couples electron transfer with translocation of ions across the membrane. This Aeromonas hydrophila subsp. hydrophila (strain ATCC 7966 / DSM 30187 / BCRC 13018 / CCUG 14551 / JCM 1027 / KCTC 2358 / NCIMB 9240 / NCTC 8049) protein is Ion-translocating oxidoreductase complex subunit D.